The chain runs to 333 residues: Protoheme IX farnesyltransferase (333 aa).

A run of 7 helical transmembrane segments spans residues 63-83, 109-129, 132-152, 160-180, 188-208, 245-265, and 292-312; these read LACTLGGGALAAAAAGVLNCI, AAFIGAISCTLAAAALLVSGV, LAAGLSLLGLCSYVLLYTAIL, IVIGGVAGAIPPLVGAAAASG, WLFALVMLWTPAHFWALALLL, GFGVWALPEGGLLYGLLLIPF, and WSIFYMFGICLLLVVSRLPMA.

The protein belongs to the UbiA prenyltransferase family. Protoheme IX farnesyltransferase subfamily.

It localises to the cell inner membrane. The catalysed reaction is heme b + (2E,6E)-farnesyl diphosphate + H2O = Fe(II)-heme o + diphosphate. The protein operates within porphyrin-containing compound metabolism; heme O biosynthesis; heme O from protoheme: step 1/1. Its function is as follows. Converts heme B (protoheme IX) to heme O by substitution of the vinyl group on carbon 2 of heme B porphyrin ring with a hydroxyethyl farnesyl side group. The sequence is that of Protoheme IX farnesyltransferase from Prochlorococcus marinus (strain MIT 9303).